We begin with the raw amino-acid sequence, 704 residues long: Elongation factor G (704 aa).

The 283-residue stretch at 8–290 (ARYRNIGISA…AVVDYLPSPV (283 aa)) folds into the tr-type G domain. GTP-binding positions include 17 to 24 (AHIDAGKT), 88 to 92 (DTPGH), and 142 to 145 (NKMD).

This sequence belongs to the TRAFAC class translation factor GTPase superfamily. Classic translation factor GTPase family. EF-G/EF-2 subfamily.

It localises to the cytoplasm. Catalyzes the GTP-dependent ribosomal translocation step during translation elongation. During this step, the ribosome changes from the pre-translocational (PRE) to the post-translocational (POST) state as the newly formed A-site-bound peptidyl-tRNA and P-site-bound deacylated tRNA move to the P and E sites, respectively. Catalyzes the coordinated movement of the two tRNA molecules, the mRNA and conformational changes in the ribosome. The chain is Elongation factor G from Pectobacterium carotovorum subsp. carotovorum (strain PC1).